The primary structure comprises 590 residues: Protein NRT1/ PTR FAMILY 6.3 (590 aa).

2 helical membrane passes run 46-66 (LTTL…MHLG) and 77-97 (FLGT…TFLG). At T101 the chain carries Phosphothreonine; by CIPK23. 10 consecutive transmembrane segments (helical) span residues 102-122 (IAIF…STII), 143-163 (GIQL…TGGV), 193-213 (FFFC…YVQD), 219-239 (WGYG…LAGT), 342-362 (MLPI…LTTL), 374-394 (IGSF…GLLL), 423-443 (IGLG…VELK), 460-480 (LGFY…ALIY), 501-521 (GLLL…VTIV), and 542-562 (YNFY…FLVF). Positions 356 and 360 each coordinate substrate.

Belongs to the major facilitator superfamily. Proton-dependent oligopeptide transporter (POT/PTR) (TC 2.A.17) family. As to quaternary structure, monomer and homodimer. The dimer has the 2 monomers in the same orientation. Interacts with CIPK23. Post-translationally, acts as a high-affinity nitrate transporter when phosphorylated and as a low-affinity transporter when dephosphorylated. Forms homodimer when unphosphorylated and monomer when phosphorylated. Low nitrogen concentration in the medium stimulates phosphorylation. Phosphorylation also regulates the nitrate signaling. In terms of tissue distribution, expressed in the stele in lateral root primordia before emergence and in the tip of primary and emerged lateral roots. Detected in emerging and immature leaves, guard cells, flower buds, style, stigma, anthers and pollen grains. Not detected in the shoot apical meristem.

The protein resides in the membrane. Functionally, dual affinity nitrate transporter. Involved in proton-dependent nitrate uptake and in the regulation of the nitrate transporter NRT2.1. Also acts as a nitrate sensor that trigger a specific signaling pathway stimulating lateral root growth and seed germination. The uptake activity is not required for sensor function. Displays an auxin transport facilitation inhibited by high nitrate concentration. Required to prevent auxin accumulation in preemerged lateral root primordia and young lateral roots when external nitrate concentration is low or null. May be involved in the basipetal transport of auxin out of the lateral root tips. Acts as a bidirectional transporter involved in root-to-shoot nitrate translocation. Recognizes specifically nitrate and chlorate, but not nitrite, alanine, sulfate, phosphate or the di-peptide Ala-Ala. In Arabidopsis thaliana (Mouse-ear cress), this protein is Protein NRT1/ PTR FAMILY 6.3 (NPF6.3).